The following is a 176-amino-acid chain: Small ribosomal subunit protein bS6 (176 aa).

The interval D97 to E176 is disordered. Residues A140–V160 are compositionally biased toward low complexity. Acidic residues predominate over residues D161–E176.

This sequence belongs to the bacterial ribosomal protein bS6 family.

Functionally, binds together with bS18 to 16S ribosomal RNA. In Gloeothece citriformis (strain PCC 7424) (Cyanothece sp. (strain PCC 7424)), this protein is Small ribosomal subunit protein bS6.